The sequence spans 441 residues: Protein C-ets-1 (441 aa).

An N6-acetyllysine; alternate mark is found at Lys8 and Lys15. Residues Lys8 and Lys15 each participate in a glycyl lysine isopeptide (Lys-Gly) (interchain with G-Cter in SUMO2); alternate cross-link. Lys15 participates in a covalent cross-link: Glycyl lysine isopeptide (Lys-Gly) (interchain with G-Cter in SUMO); alternate. Thr38 carries the post-translational modification Phosphothreonine; by MAPK. Residues 51–136 form the PNT domain; it reads ATFSGFTKEQ…EHLEILQKED (86 aa). The segment at 130 to 243 is activation domain; required for transcription activation; that stretch reads EILQKEDVKP…DNMCMGRASR (114 aa). A Glycyl lysine isopeptide (Lys-Gly) (interchain with G-Cter in SUMO2) cross-link involves residue Lys138. Tyr223 bears the Phosphotyrosine mark. Residue Lys227 forms a Glycyl lysine isopeptide (Lys-Gly) (interchain with G-Cter in SUMO) linkage. Residues Ser251 and Ser254 each carry the phosphoserine modification. The residue at position 265 (Thr265) is a Phosphothreonine. A phosphoserine mark is found at Ser267, Ser270, Ser282, and Ser285. A helix HI-1 region spans residues 304 to 312; it reads FKDYVRDRA. At Lys305 the chain carries N6-acetyllysine. The tract at residues 323 to 330 is helix HI-2; that stretch reads AAALAGYT. A DNA-binding region (ETS) is located at residues 335–415; that stretch reads IQLWQFLLEL…AGKRYVYRFV (81 aa). The interval 418–422 is helix H4; it reads LQSLL. The segment at 426–432 is helix H5; sequence PEELHAM.

Belongs to the ETS family. In terms of assembly, binds DNA as a homodimer; homodimerization is required for transcription activation. Interacts with MAF and MAFB. Interacts with PAX5; the interaction alters DNA-binding properties. Interacts with DAXX. Interacts with UBE2I. Interacts with SP100; the interaction is direct and modulates ETS1 transcriptional activity. In terms of processing, sumoylated on Lys-15 and Lys-227, preferentially with SUMO2; which inhibits transcriptional activity. Post-translationally, ubiquitinated; which induces proteasomal degradation. Phosphorylation at Ser-251, Ser-282 and Ser-285 by CaMK2/CaMKII in response to calcium signaling decreases affinity for DNA: an increasing number of phosphoserines causes DNA-binding to become progressively weaker.

It localises to the nucleus. Its subcellular location is the cytoplasm. Its activity is regulated as follows. Autoinhibited by a module composed of four alpha helices (HI-1, HI-2, H4, and H5) that flank the DNA-binding ETS domain, reducing the affinity for DNA. Phosphorylation by CaMK2/CaMKII in response to calcium signaling decreases affinity for DNA. Functionally, transcription factor. Directly controls the expression of cytokine and chemokine genes in a wide variety of different cellular contexts. May control the differentiation, survival and proliferation of lymphoid cells. May also regulate angiogenesis through regulation of expression of genes controlling endothelial cell migration and invasion. In Rattus norvegicus (Rat), this protein is Protein C-ets-1 (Ets1).